Reading from the N-terminus, the 31-residue chain is Superoxide dismutase [Cu-Zn] (31 aa).

Belongs to the Cu-Zn superoxide dismutase family. Requires Cu cation as cofactor. The cofactor is Zn(2+).

The protein resides in the cytoplasm. The catalysed reaction is 2 superoxide + 2 H(+) = H2O2 + O2. Functionally, destroys radicals which are normally produced within the cells and which are toxic to biological systems. In Striga hermonthica (Purple witchweed), this protein is Superoxide dismutase [Cu-Zn].